A 219-amino-acid chain; its full sequence is Inner membrane protein YccA (219 aa).

The Periplasmic segment spans residues 1-22 (MDRIVSSSHDRTSLLSTHKVLR). 2 helical membrane passes run 23–43 (NTYFLLSLTLAFSAITATAST) and 44–64 (VLMLPSPGLILTLVGMYGLMF). Residues 65-73 (LTYKTANKP) lie on the Periplasmic side of the membrane. The helical transmembrane segment at 74-94 (TGIISAFAFTGFLGYILGPIL) threads the bilayer. Topologically, residues 95-104 (NTYLSAGMGD) are cytoplasmic. The helical transmembrane segment at 105–125 (VIAMALGGTALVFFCCSAYVL) threads the bilayer. Over 126 to 133 (TTRKDMSF) the chain is Periplasmic. Residues 134-154 (LGGMLMAGIVVVLIGMVANIF) form a helical membrane-spanning segment. The Cytoplasmic portion of the chain corresponds to 155–157 (LQL). Residues 158-178 (PALHLAISAVFILISSGAILF) traverse the membrane as a helical segment. Topologically, residues 179–195 (ETSNIIHGGETNYIRAT) are periplasmic. Residues 196–216 (VSLYVSLYNIFVSLLSILGFA) traverse the membrane as a helical segment. At 217-219 (SRD) the chain is on the cytoplasmic side.

The protein belongs to the BI1 family.

The protein resides in the cell inner membrane. In Escherichia coli O6:H1 (strain CFT073 / ATCC 700928 / UPEC), this protein is Inner membrane protein YccA (yccA).